A 220-amino-acid polypeptide reads, in one-letter code: Protein DGCR6 (220 aa).

Positions 76–142 form a coiled coil; that stretch reads KSLYNQRLRL…EQRAMDQKIV (67 aa).

The protein belongs to the gonadal family. In terms of tissue distribution, found in all tissues examined with highest expression in liver, heart and skeletal muscle. Lower levels in pancreas and placenta. Weak expression in brain.

The protein resides in the nucleus. Its function is as follows. May play a role in neural crest cell migration into the third and fourth pharyngeal pouches. The polypeptide is Protein DGCR6 (DGCR6) (Homo sapiens (Human)).